Reading from the N-terminus, the 470-residue chain is MSKKYDAGVKEYRDTYWTPDYVPLDTDLLACFKVTGQEGVPREEVAAAVAAESSTGTWSTVWSELLTDLEFYKGRCYRIEDVPGDKESFYAFIAYPLDLFEEGSITNVLTSLVGNVFGFKALRHLRLEDIRFPMAFIKTCGGPPNGIVVERDRLNKYGRPLLGCTIKPKLGLSGKNYGRVVYECLRGGLDLTKDDENINSQPFQRWRERFEFVAEAVKLAQQETGEVKGHYLNCTATTPEEMYERAEFAKELDMPIIMHDYITGGFTANTGLANWCRKNGMLLHIHRAMHAVIDRHPKHGIHFRVLAKCLRLSGGDQLHTGTVVGKLEGDRQTTLGFIDNLRESFVPEDRNRGNFFDQDWGSMPGVFAVASGGIHVWHMPALLAIFGDDSCLQFGGGTHGHPWGSAAGAAANRVALEACVKARNAGREIEKESRDILMEAAKHSPELAIALETWKEIKFEFDTVDKLDVQ.

Substrate contacts are provided by Asn115 and Thr165. Lys167 functions as the Proton acceptor in the catalytic mechanism. A substrate-binding site is contributed by Lys169. 3 residues coordinate Mg(2+): Lys193, Asp195, and Glu196. Position 193 is an N6-carboxylysine (Lys193). Catalysis depends on His286, which acts as the Proton acceptor. Residues Arg287, His319, and Ser371 each coordinate substrate.

The protein belongs to the RuBisCO large chain family. Type I subfamily. Heterohexadecamer of 8 large chains and 8 small chains. Mg(2+) serves as cofactor.

It localises to the carboxysome. The catalysed reaction is 2 (2R)-3-phosphoglycerate + 2 H(+) = D-ribulose 1,5-bisphosphate + CO2 + H2O. It carries out the reaction D-ribulose 1,5-bisphosphate + O2 = 2-phosphoglycolate + (2R)-3-phosphoglycerate + 2 H(+). In terms of biological role, ruBisCO catalyzes two reactions: the carboxylation of D-ribulose 1,5-bisphosphate, the primary event in carbon dioxide fixation, as well as the oxidative fragmentation of the pentose substrate in the photorespiration process. Both reactions occur simultaneously and in competition at the same active site. The protein is Ribulose bisphosphate carboxylase large chain of Prochlorococcus marinus (strain MIT 9303).